We begin with the raw amino-acid sequence, 154 residues long: UPF0225 protein YPDSF_0962 (154 aa).

Belongs to the UPF0225 family.

The sequence is that of UPF0225 protein YPDSF_0962 from Yersinia pestis (strain Pestoides F).